The sequence spans 179 residues: Cell division protein ZapC (179 aa).

Belongs to the ZapC family. Interacts directly with FtsZ.

It localises to the cytoplasm. Contributes to the efficiency of the cell division process by stabilizing the polymeric form of the cell division protein FtsZ. Acts by promoting interactions between FtsZ protofilaments and suppressing the GTPase activity of FtsZ. In Ferrimonas balearica (strain DSM 9799 / CCM 4581 / KCTC 23876 / PAT), this protein is Cell division protein ZapC.